Consider the following 255-residue polypeptide: uncharacterized protein (255 aa).

The signal sequence occupies residues M1 to A28. N-linked (GlcNAc...) asparagine glycans are attached at residues N38, N61, and N83.

It is found in the secreted. This is an uncharacterized protein from Dictyostelium discoideum (Social amoeba).